A 211-amino-acid chain; its full sequence is Large ribosomal subunit protein uL3 (211 aa).

This sequence belongs to the universal ribosomal protein uL3 family. Part of the 50S ribosomal subunit. Forms a cluster with proteins L14 and L19.

Its function is as follows. One of the primary rRNA binding proteins, it binds directly near the 3'-end of the 23S rRNA, where it nucleates assembly of the 50S subunit. The polypeptide is Large ribosomal subunit protein uL3 (Akkermansia muciniphila (strain ATCC BAA-835 / DSM 22959 / JCM 33894 / BCRC 81048 / CCUG 64013 / CIP 107961 / Muc)).